The following is a 173-amino-acid chain: MTYFVLFLGLCFVLGGLAVASNPSPYYGVVGLVVASVAGCGWLLSLGVSFVSLVLFMVYLGGMLVVFVYSVSLAADPFPEAWGDWRVVGYGAGFVLVLVVGGVVGGLVEFWHPGVITVDSGGMFSVRLDFSGVAMFYSCGVGMFLVAGWGLLLTLFVVLELVRGLSRGAIRAV.

5 helical membrane-spanning segments follow: residues 1–21 (MTYFVLFLGLCFVLGGLAVAS), 27–47 (YGVVGLVVASVAGCGWLLSLG), 48–68 (VSFVSLVLFMVYLGGMLVVFV), 87–107 (VVGYGAGFVLVLVVGGVVGGL), and 139–159 (CGVGMFLVAGWGLLLTLFVVL).

Belongs to the complex I subunit 6 family.

The protein resides in the mitochondrion membrane. It catalyses the reaction a ubiquinone + NADH + 5 H(+)(in) = a ubiquinol + NAD(+) + 4 H(+)(out). Functionally, core subunit of the mitochondrial membrane respiratory chain NADH dehydrogenase (Complex I) that is believed to belong to the minimal assembly required for catalysis. Complex I functions in the transfer of electrons from NADH to the respiratory chain. The immediate electron acceptor for the enzyme is believed to be ubiquinone. This chain is NADH-ubiquinone oxidoreductase chain 6 (MT-ND6), found in Larus canus (Common gull).